The chain runs to 99 residues: Acylphosphatase-1 (99 aa).

Position 2 is an N-acetylalanine (A2). One can recognise an Acylphosphatase-like domain in the interval 9 to 99 (SVDYEVSGRV…LEHTDFQIRK (91 aa)). Catalysis depends on residues R24 and N42.

The protein belongs to the acylphosphatase family. As to expression, organ-common type isozyme is found in many different tissues.

The catalysed reaction is an acyl phosphate + H2O = a carboxylate + phosphate + H(+). The chain is Acylphosphatase-1 (ACYP1) from Gallus gallus (Chicken).